The primary structure comprises 504 residues: Histidine ammonia-lyase (504 aa).

A cross-link (5-imidazolinone (Ala-Gly)) is located at residues 141-143; the sequence is ASG. Ser142 is subject to 2,3-didehydroalanine (Ser).

The protein belongs to the PAL/histidase family. In terms of processing, contains an active site 4-methylidene-imidazol-5-one (MIO), which is formed autocatalytically by cyclization and dehydration of residues Ala-Ser-Gly.

The protein resides in the cytoplasm. The catalysed reaction is L-histidine = trans-urocanate + NH4(+). It participates in amino-acid degradation; L-histidine degradation into L-glutamate; N-formimidoyl-L-glutamate from L-histidine: step 1/3. In Geobacillus thermodenitrificans (strain NG80-2), this protein is Histidine ammonia-lyase.